The sequence spans 412 residues: Transforming growth factor beta-3 proprotein (412 aa).

Positions 1 to 23 (MKMHLQRALVVLALLNFATVSLS) are cleaved as a signal peptide. Asn74, Asn135, and Asn142 each carry an N-linked (GlcNAc...) asparagine glycan. The Cell attachment site signature appears at 261-263 (RGD). Position 293 is an N5-methylglutamine (Gln293). 4 disulfides stabilise this stretch: Cys307/Cys316, Cys315/Cys378, Cys344/Cys409, and Cys348/Cys411.

It belongs to the TGF-beta family. In terms of assembly, interacts with ASPN. Latency-associated peptide: Homodimer; disulfide-linked. Latency-associated peptide: Interacts with Transforming growth factor beta-3 (TGF-beta-3) chain; interaction is non-covalent and maintains (TGF-beta-3) in a latent state. Latency-associated peptide: Interacts with LRRC32/GARP; leading to regulate activation of TGF-beta-3 and promote epithelial fusion during palate development. Latency-associated peptide: Interacts (via cell attachment site) with integrins, leading to release of the active TGF-beta-3. Transforming growth factor beta-3: Homodimer; disulfide-linked. Transforming growth factor beta-3: Interacts with TGF-beta receptors (TGFBR1 and TGFBR2), leading to signal transduction. In terms of processing, transforming growth factor beta-3 proprotein: The precursor proprotein is cleaved in the Golgi apparatus to form Transforming growth factor beta-3 (TGF-beta-3) and Latency-associated peptide (LAP) chains, which remain non-covalently linked, rendering TGF-beta-3 inactive. Post-translationally, methylated at Gln-293 by N6AMT1.

The protein localises to the secreted. Its subcellular location is the extracellular space. It localises to the extracellular matrix. In terms of biological role, transforming growth factor beta-3 proprotein: Precursor of the Latency-associated peptide (LAP) and Transforming growth factor beta-3 (TGF-beta-3) chains, which constitute the regulatory and active subunit of TGF-beta-3, respectively. Its function is as follows. Required to maintain the Transforming growth factor beta-3 (TGF-beta-3) chain in a latent state during storage in extracellular matrix. Associates non-covalently with TGF-beta-3 and regulates its activation via interaction with 'milieu molecules', such as LTBP1 and LRRC32/GARP, that control activation of TGF-beta-3. Interaction with integrins results in distortion of the Latency-associated peptide chain and subsequent release of the active TGF-beta-3. Functionally, transforming growth factor beta-3: Multifunctional protein that regulates embryogenesis and cell differentiation and is required in various processes such as secondary palate development. Activation into mature form follows different steps: following cleavage of the proprotein in the Golgi apparatus, Latency-associated peptide (LAP) and Transforming growth factor beta-3 (TGF-beta-3) chains remain non-covalently linked rendering TGF-beta-3 inactive during storage in extracellular matrix. At the same time, LAP chain interacts with 'milieu molecules', such as LTBP1 and LRRC32/GARP that control activation of TGF-beta-3 and maintain it in a latent state during storage in extracellular milieus. TGF-beta-3 is released from LAP by integrins: integrin-binding results in distortion of the LAP chain and subsequent release of the active TGF-beta-3. Once activated following release of LAP, TGF-beta-3 acts by binding to TGF-beta receptors (TGFBR1 and TGFBR2), which transduce signal. The polypeptide is Transforming growth factor beta-3 proprotein (TGFB3) (Homo sapiens (Human)).